The primary structure comprises 301 residues: NADH-ubiquinone oxidoreductase chain 1 (301 aa).

8 consecutive transmembrane segments (helical) span residues 4 to 24 (IIPI…VLGY), 62 to 82 (LALF…MWIP), 96 to 116 (ILFM…SGWA), 140 to 160 (LAII…STLI), 165 to 185 (YTWL…STIA), 216 to 236 (LFFL…IILF), 247 to 267 (EMYT…FLWI), and 279 to 299 (LMHL…MWHV).

It belongs to the complex I subunit 1 family.

Its subcellular location is the mitochondrion inner membrane. The enzyme catalyses a ubiquinone + NADH + 5 H(+)(in) = a ubiquinol + NAD(+) + 4 H(+)(out). Core subunit of the mitochondrial membrane respiratory chain NADH dehydrogenase (Complex I) that is believed to belong to the minimal assembly required for catalysis. Complex I functions in the transfer of electrons from NADH to the respiratory chain. The immediate electron acceptor for the enzyme is believed to be ubiquinone. This is NADH-ubiquinone oxidoreductase chain 1 (MT-ND1) from Nyctalus noctula (Noctule bat).